The following is a 24-amino-acid chain: Humanin-like 12 (24 aa).

Belongs to the humanin family.

It is found in the secreted. The protein localises to the cytoplasm. In terms of biological role, plays a role as a neuroprotective and antiapoptotic factor. This chain is Humanin-like 12, found in Homo sapiens (Human).